Here is a 281-residue protein sequence, read N- to C-terminus: MKGKIYSINSGIYSIKDENNNFHNLPALGVFRHKNIVPLVGDYVEFEKEKYITKIYERQNEFIRPKVANIDHIIIVMSIHEPEFQSFLVDKYMAFIESANIEPVLFNTKADLGTSKYKNEYESLGYKVYEISYKTDEWVKNIAKLFTNKTNVLMGQSGVGKTTLVNKITGSNFAVQAISKFANRGKHTTRIVQIVNVFDNGELIDTPGFSSLDINLTKQQLAYSYKQFKELGKFCKFKTCFHQNEPENFCNIKQAVKDNIIPQFRYNNYLKLLQEVENEQK.

The CP-type G domain occupies 59-212; the sequence is QNEFIRPKVA…LIDTPGFSSL (154 aa). GTP-binding positions include 108 to 111 and 155 to 163; these read TKAD and GQSGVGKTT. Positions 235, 240, 242, and 250 each coordinate Zn(2+).

The protein belongs to the TRAFAC class YlqF/YawG GTPase family. RsgA subfamily. In terms of assembly, monomer. Associates with 30S ribosomal subunit, binds 16S rRNA. The cofactor is Zn(2+).

The protein resides in the cytoplasm. Functionally, one of several proteins that assist in the late maturation steps of the functional core of the 30S ribosomal subunit. Helps release RbfA from mature subunits. May play a role in the assembly of ribosomal proteins into the subunit. Circularly permuted GTPase that catalyzes slow GTP hydrolysis, GTPase activity is stimulated by the 30S ribosomal subunit. This Mycoplasmopsis agalactiae (strain NCTC 10123 / CIP 59.7 / PG2) (Mycoplasma agalactiae) protein is Small ribosomal subunit biogenesis GTPase RsgA.